An 855-amino-acid polypeptide reads, in one-letter code: uncharacterized protein (855 aa).

A run of 10 helical transmembrane segments spans residues 24-44 (PFQY…IVAI), 256-276 (AFTV…IFLI), 318-338 (IGTG…IGLV), 361-381 (LLKG…PPAI), 404-424 (LMPW…LMLW), 430-450 (LVVA…IAPP), 487-507 (IAIA…ISVG), 725-745 (ITIA…LSAL), 780-800 (MGGM…WILV), and 821-841 (FLRA…YPAW).

Belongs to the ABC-4 integral membrane protein family. As to quaternary structure, the complex is probably composed of two ATP-binding proteins (Rv0986) and two transmembrane proteins (Rv0987).

Its subcellular location is the cell membrane. Functionally, probably part of an ABC transporter complex involved in host cell binding either through secretion of an adherence factor or through maintaining the architecture and integrity of the mycobacterial cell envelope. Could be required for host endothelial-cell invasion and/or intracellular survival. This is an uncharacterized protein from Mycobacterium tuberculosis (strain ATCC 25618 / H37Rv).